A 434-amino-acid chain; its full sequence is Nicotinate phosphoribosyltransferase (434 aa).

The residue at position 242 (histidine 242) is a Phosphohistidine; by autocatalysis.

Belongs to the NAPRTase family. In terms of processing, transiently phosphorylated on a His residue during the reaction cycle. Phosphorylation strongly increases the affinity for substrates and increases the rate of nicotinate D-ribonucleotide production. Dephosphorylation regenerates the low-affinity form of the enzyme, leading to product release.

It carries out the reaction nicotinate + 5-phospho-alpha-D-ribose 1-diphosphate + ATP + H2O = nicotinate beta-D-ribonucleotide + ADP + phosphate + diphosphate. It participates in cofactor biosynthesis; NAD(+) biosynthesis; nicotinate D-ribonucleotide from nicotinate: step 1/1. In terms of biological role, catalyzes the synthesis of beta-nicotinate D-ribonucleotide from nicotinate and 5-phospho-D-ribose 1-phosphate at the expense of ATP. The protein is Nicotinate phosphoribosyltransferase of Nitrobacter hamburgensis (strain DSM 10229 / NCIMB 13809 / X14).